Consider the following 297-residue polypeptide: MPPRRYNPDDRRDALLERINLDIPAAVAQALREDLGGEVDAGNDITAQLLPADTQAHATVITREDGVFCGKRWVEEVFIQLAGDDVRLTWHVDDGDAIHANQTVFELNGPARVLLTGERTALNFVQTLSGVASEVRRYVGLLAGTQTQLLDTRKTLPGLRTALKYAVLCGGGANHRLGLTDAFLIKENHIIASGSVRQAVEKAFWLHPDVPVEVEVENLDELDDALKAGADIIMLDNFNTDQMREAVKRVNGQARLEVSGNVTAETLREFAETGVDFISVGALTKHVRALDLSMRFC.

Position 2 is a blocked amino end (Pro) (proline 2). Residues arginine 119, 152–154 (TRK), arginine 176, lysine 186, glutamate 215, aspartate 236, 259–261 (SGN), and 280–282 (VGA) each bind substrate.

Belongs to the NadC/ModD family. Hexamer formed by 3 homodimers. Homodimer.

The enzyme catalyses nicotinate beta-D-ribonucleotide + CO2 + diphosphate = quinolinate + 5-phospho-alpha-D-ribose 1-diphosphate + 2 H(+). It functions in the pathway cofactor biosynthesis; NAD(+) biosynthesis; nicotinate D-ribonucleotide from quinolinate: step 1/1. Functionally, involved in the catabolism of quinolinic acid (QA). The polypeptide is Nicotinate-nucleotide pyrophosphorylase [carboxylating] (nadC) (Salmonella typhimurium (strain LT2 / SGSC1412 / ATCC 700720)).